We begin with the raw amino-acid sequence, 1877 residues long: Protein TIC 214 (1877 aa).

6 consecutive transmembrane segments (helical) span residues 18–38 (IINS…FSVG), 64–84 (FITG…HLAL), 87–107 (PHTI…WKNH), 124–144 (LSIQ…HFIL), 172–192 (VGWL…LFWI), and 221–241 (IFRI…PSPI). Disordered regions lie at residues 246–313 (LKET…GKEK), 644–695 (DDFE…NSDR), and 774–795 (PEFK…QKKE). 3 stretches are compositionally biased toward acidic residues: residues 251–268 (ETEE…EIET), 281–304 (GSTE…DETE), and 645–659 (DFEE…ESTE). A compositionally biased stretch (basic and acidic residues) spans 685–695 (TSTKDTTNSDR).

It belongs to the TIC214 family. Part of the Tic complex.

The protein localises to the plastid. The protein resides in the chloroplast inner membrane. Involved in protein precursor import into chloroplasts. May be part of an intermediate translocation complex acting as a protein-conducting channel at the inner envelope. This chain is Protein TIC 214, found in Chloranthus spicatus (Chulantree).